A 931-amino-acid polypeptide reads, in one-letter code: Kinesin heavy chain (931 aa).

A Kinesin motor domain is found at serine 6 to isoleucine 329. ATP is bound by residues glycine 87–serine 94 and glycine 237–threonine 244. Positions alanine 342 to alanine 864 form a coiled coil. 2 disordered regions span residues threonine 388–leucine 465 and alanine 886–serine 931. Over residues serine 402–proline 419 the composition is skewed to polar residues. Positions leucine 432–serine 456 are enriched in basic and acidic residues. Polar residues predominate over residues proline 902 to serine 931.

It belongs to the TRAFAC class myosin-kinesin ATPase superfamily. Kinesin family. Kinesin subfamily.

The protein resides in the cytoplasm. Its subcellular location is the cytoskeleton. Kinesin is a microtubule-associated force-producing protein that may play a role in organelle transport. Its motor activity is directed toward the microtubule's plus end. This Gibberella moniliformis (Maize ear and stalk rot fungus) protein is Kinesin heavy chain (KLP1).